Reading from the N-terminus, the 613-residue chain is MDEFVKSLLKANYLITPSAYYLLREYYEKGEFSIVELVKFARSRESYIITDALATEFLKVKGLEPILPVETKGGFVSTGESQKEQSYEESFGTKEEISQEIKEGESFISTGSEPLEEELNSIGIEEIGANEELVSNGNDNGGEAIVFDKYGYPMVYAPEEIEVEEKEYSKYEDLTIPMNPDFNYVEIKEDYDVVFDVRNVKLKPPKVKNGNGKEGEIIVEAYASLFRSRLKKLRKILRENPELDNVVDIGKLKYVKEDETVTIIGLVNSKREVNKGLIFEIEDLTGKVKVFLPKDSEDYREAFKVLPDAVVAFKGVYSKRGILYANKFYLPDVPLYRRQKPPLEEKVYAILISDIHVGSKEFCENAFIKFLEWLNGNVETKEEEEIVSRVKYLIIAGDVVDGVGVYPGQYADLTIPDIFDQYEALANLLSHVPKHITMFIAPGNHDAARQAIPQPEFYKEYAKPIYKLKNAVIISNPAVIRLHGRDFLIAHGRGIEDVVGSVPGLTHHKPGLPMVELLKMRHVAPMFGGKVPIAPDPEDLLVIEEVPDVVHMGHVHVYDAVVYRGVQLVNSATWQAQTEFQKMVNIVPTPAKVPVVDIDTAKVVKVLDFSGWC.

The protein belongs to the DNA polymerase delta/II small subunit family. Heterodimer of a large subunit and a small subunit.

The catalysed reaction is DNA(n) + a 2'-deoxyribonucleoside 5'-triphosphate = DNA(n+1) + diphosphate. The enzyme catalyses Exonucleolytic cleavage in the 3'- to 5'-direction to yield nucleoside 5'-phosphates.. Its function is as follows. Possesses two activities: a DNA synthesis (polymerase) and an exonucleolytic activity that degrades single-stranded DNA in the 3' to 5' direction. Has a template-primer preference which is characteristic of a replicative DNA polymerase. The sequence is that of DNA polymerase II small subunit (polB) from Pyrococcus furiosus (strain ATCC 43587 / DSM 3638 / JCM 8422 / Vc1).